Reading from the N-terminus, the 380-residue chain is Cytochrome b (380 aa).

The next 4 membrane-spanning stretches (helical) occupy residues 34–54, 78–99, 114–134, and 179–199; these read FGSLLGICLLTQILTGLLLAM, WLIRNLHANGASFFFICIYLHI, WNTGVILLLTLMATAFVGYVL, and FFALHFLLPFMIAGLTLIHLT. 2 residues coordinate heme b: H84 and H98. 2 residues coordinate heme b: H183 and H197. H202 is a binding site for a ubiquinone. Helical transmembrane passes span 227–247, 289–309, 321–341, and 348–368; these read LKDILGFMLMLLPLTTLALFS, LGGVLALAASVLVLFLAPFLH, LSQLLFWILVANLFILTWVGS, and FIIIGQLASITYFTILLILFP.

The protein belongs to the cytochrome b family. As to quaternary structure, the cytochrome bc1 complex contains 11 subunits: 3 respiratory subunits (MT-CYB, CYC1 and UQCRFS1), 2 core proteins (UQCRC1 and UQCRC2) and 6 low-molecular weight proteins (UQCRH/QCR6, UQCRB/QCR7, UQCRQ/QCR8, UQCR10/QCR9, UQCR11/QCR10 and a cleavage product of UQCRFS1). This cytochrome bc1 complex then forms a dimer. It depends on heme b as a cofactor.

The protein localises to the mitochondrion inner membrane. Component of the ubiquinol-cytochrome c reductase complex (complex III or cytochrome b-c1 complex) that is part of the mitochondrial respiratory chain. The b-c1 complex mediates electron transfer from ubiquinol to cytochrome c. Contributes to the generation of a proton gradient across the mitochondrial membrane that is then used for ATP synthesis. The sequence is that of Cytochrome b (MT-CYB) from Ardenna tenuirostris (Short-tailed shearwater).